Here is a 111-residue protein sequence, read N- to C-terminus: MKSLLFTLAVFMLLAQLVSGNWYVKKCLNDVGICKKKCKPEEMHVKNGWAMCGKQRDCCVPADRRANYPAFCVQTKTTRTSTVTATTATTTLMMTTASMSLMAPTPVSPTG.

Positions 1–20 are cleaved as a signal peptide; it reads MKSLLFTLAVFMLLAQLVSG. An in vitro binds to LPS, mediates antimicrobial activity and inhibits LPS-mediated inflammation region spans residues 21-63; it reads NWYVKKCLNDVGICKKKCKPEEMHVKNGWAMCGKQRDCCVPAD. Disulfide bonds link Cys27–Cys58, Cys34–Cys52, and Cys38–Cys59.

This sequence belongs to the beta-defensin family. Homodimer or homooligomer; disulfide-linked. Post-translationally, O-glycosylated; glycans contain alpha(2,3)-linked sialic acids.

Its subcellular location is the secreted. Its function is as follows. Highly glycosylated atypical beta-defensin involved in several aspects of sperm function. Facilitates sperm transport in the female reproductive tract and contributes to sperm protection against immunodetection; both functions are probably implicating the negative surface charge provided by its O-linked oligosaccharides in the sperm glycocalyx. Involved in binding of sperm to oviductal epithelial cells to form a sperm reservoir until ovulation. Release from the sperm surface during capacitation and ovaluation by an elevation of oviductal fluid pH is unmasking other surface components and allows sperm to penetrate the cumulus matrix and bind to the zona pellucida of the oocyte. In vitro has antimicrobial activity and may inhibit LPS-mediated inflammation. The polypeptide is Beta-defensin 126 (DEFB126) (Gorilla gorilla gorilla (Western lowland gorilla)).